A 770-amino-acid polypeptide reads, in one-letter code: POU domain, class 2, transcription factor 1 (770 aa).

The span at 1 to 26 (MNNPSETNKSSMESEDASTGTQTNGL) shows a compositional bias: polar residues. Disordered stretches follow at residues 1–33 (MNNP…KQPV), 68–97 (LNVQ…VQSA), 262–285 (VQTL…EPSD), and 357–385 (LSSD…RRKK). A compositionally biased stretch (low complexity) spans 80 to 97 (DSQQSSQPSSQPPSVQSA). A compositionally biased stretch (polar residues) spans 262–272 (VQTLPQSQSTP). Phosphothreonine occurs at positions 271 and 277. One can recognise a POU-specific domain in the interval 281-355 (EEPSDLEELE…LLEKWLNDAE (75 aa)). Ser-284 carries the post-translational modification Phosphoserine. A compositionally biased stretch (low complexity) spans 357–372 (LSSDSTASSPSALNSP). A DNA-binding region (homeobox) is located at residues 382–441 (RRKKRTSIETNIRVALEKSFMENQKPTSEDITLIAEQLNMEKEVIRVWFCNRRQKEKRIN). Phosphoserine is present on residues Ser-388 and Ser-451. The span at 519-580 (TTTAGTTDST…TNTTQTTSTP (62 aa)) shows a compositional bias: low complexity. A disordered region spans residues 519–589 (TTTAGTTDST…PLPSPLGASQ (71 aa)).

The protein belongs to the POU transcription factor family. Class-2 subfamily. Interacts with POU2AF1; the interaction increases POU2F1 transactivation activity. Interacts with NR3C1, AR, PGR and HCFC1. Post-translationally, phosphorylated by PRKDC. As to expression, ubiquitously expressed. However, isoforms 4 and 5 are only expressed in lymphocytes.

Its subcellular location is the nucleus. Its function is as follows. Transcription factor that binds to the octamer motif (5'-ATTTGCAT-3') and activates the promoters of the genes for some small nuclear RNAs (snRNA) and of genes such as those for histone H2B and immunoglobulins. Modulates transcription transactivation by NR3C1, AR and PGR. The polypeptide is POU domain, class 2, transcription factor 1 (Pou2f1) (Mus musculus (Mouse)).